We begin with the raw amino-acid sequence, 156 residues long: Anaerobic ribonucleoside-triphosphate reductase-activating protein (156 aa).

[4Fe-4S] cluster-binding residues include Cys26, Cys30, and Cys33. Residues 32–34 (GCY) and Gly72 contribute to the S-adenosyl-L-methionine site.

It belongs to the organic radical-activating enzymes family. Forms a tetramer composed of two NrdD and two NrdG subunits. [4Fe-4S] cluster serves as cofactor.

It catalyses the reaction glycyl-[protein] + reduced [flavodoxin] + S-adenosyl-L-methionine = glycin-2-yl radical-[protein] + semiquinone [flavodoxin] + 5'-deoxyadenosine + L-methionine + H(+). Functionally, activation of anaerobic ribonucleoside-triphosphate reductase under anaerobic conditions by generation of an organic free radical, using S-adenosylmethionine and reduced flavodoxin as cosubstrates to produce 5'-deoxy-adenosine. This chain is Anaerobic ribonucleoside-triphosphate reductase-activating protein (NRDG), found in Escherichia coli (Bacteriophage T4).